Here is a 179-residue protein sequence, read N- to C-terminus: Natural killer cells antigen CD94 (179 aa).

The Cytoplasmic segment spans residues 1-10 (MAVSQTTLWN). The chain crosses the membrane as a helical; Signal-anchor for type II membrane protein span at residues 11-31 (LISGILGVICLLLMTTMGILL). The Extracellular segment spans residues 32-179 (KNLLLTESIQ…SRFICKQELM (148 aa)). Disulfide bonds link Cys58/Cys70, Cys61/Cys72, Cys89/Cys174, and Cys152/Cys166. Residues 68 to 175 (HQCNCYLFFD…CEDKSRFICK (108 aa)) enclose the C-type lectin domain. Residues Asn93 and Asn125 are each glycosylated (N-linked (GlcNAc...) asparagine).

In terms of assembly, can form disulfide-bonded heterodimer with NKG2 family members KLRC1 and KLRC2. KLRD1-KLRC1 heterodimer interacts with peptide-bound MHC-E-B2M heterotrimeric complex. KLRD1 plays a prominent role in directly interacting with MHC-E. KLRD1-KLRC1 interacts with much higher affinity with peptide-bound MHC-E-B2M than KLRD1-KLRC2. Interacts with the adapter protein TYROBP/DAP12; this interaction is required for cell surface expression and cell activation.

It is found in the cell membrane. In terms of biological role, immune receptor involved in self-nonself discrimination. In complex with KLRC1 or KLRC2 on cytotoxic and regulatory lymphocyte subsets, recognizes non-classical major histocompatibility (MHC) class Ib molecule MHC-E loaded with self-peptides derived from the signal sequence of classical MHC class Ia and non-classical MHC class Ib molecules. Enables cytotoxic cells to monitor the expression of MHC class I molecules in healthy cells and to tolerate self. Primarily functions as a ligand binding subunit as it lacks the capacity to signal. KLRD1-KLRC1 acts as an immune inhibitory receptor. Key inhibitory receptor on natural killer (NK) cells that regulates their activation and effector functions. Dominantly counteracts T cell receptor signaling on a subset of memory/effector CD8-positive T cells as part of an antigen-driven response to avoid autoimmunity. On intraepithelial CD8-positive gamma-delta regulatory T cells triggers TGFB1 secretion, which in turn limits the cytotoxic programming of intraepithelial CD8-positive alpha-beta T cells, distinguishing harmless from pathogenic antigens. In MHC-E-rich tumor microenvironment, acts as an immune inhibitory checkpoint and may contribute to progressive loss of effector functions of NK cells and tumor-specific T cells, a state known as cell exhaustion. Upon MHC-E-peptide binding, transmits intracellular signals through KLRC1 immunoreceptor tyrosine-based inhibition motifs (ITIMs) by recruiting INPP5D/SHIP-1 and INPPL1/SHIP-2 tyrosine phosphatases to ITIMs, and ultimately opposing signals transmitted by activating receptors through dephosphorylation of proximal signaling molecules. Its function is as follows. KLRD1-KLRC2 acts as an immune activating receptor. On cytotoxic lymphocyte subsets recognizes MHC-E loaded with signal sequence-derived peptides from non-classical MHC class Ib MHC-G molecules, likely playing a role in the generation and effector functions of adaptive NK cells and in maternal-fetal tolerance during pregnancy. Regulates the effector functions of terminally differentiated cytotoxic lymphocyte subsets, and in particular may play a role in adaptive NK cell response to viral infection. Upon MHC-E-peptide binding, transmits intracellular signals via the adapter protein TYROBP/DAP12, triggering the phosphorylation of proximal signaling molecules and cell activation. The polypeptide is Natural killer cells antigen CD94 (KLRD1) (Canis lupus familiaris (Dog)).